The sequence spans 520 residues: Serine protease Hip1 (520 aa).

Positions 1 to 30 (MGMRLSRRDKIARMLLIWAALAAVALVLVG) are cleaved as a signal peptide. Residue Cys31 is the site of N-palmitoyl cysteine attachment. Residue Cys31 is the site of S-diacylglycerol cysteine attachment. Residues 102 to 497 (GSLVINPGGP…TQHTVVFQGD (396 aa)) form the AB hydrolase-1 domain. The active-site Nucleophile is the Ser228. Asp463 is a catalytic residue. The active-site Proton donor is His490.

The protein belongs to the peptidase S33 family.

It is found in the cell envelope. It localises to the cell membrane. Its function is as follows. Serine protease that promotes pathogenesis by promoting the processing and the extracellular release of the M.bovis heat-shock protein GroEL2. Functionally, key immunomodulatory virulence factor, which promotes survival in host macrophages and modulates host immune responses. In Mycobacterium bovis (strain ATCC BAA-935 / AF2122/97), this protein is Serine protease Hip1.